The primary structure comprises 638 residues: LIM domain kinase 2 (638 aa).

LIM zinc-binding domains are found at residues 12-63 (CPGC…CPKD) and 72-124 (CHGC…CGKC). Residues 152–239 (LISMPATTEG…TLQLLIEHDP (88 aa)) form the PDZ domain. Residue T210 is modified to Phosphothreonine. Residues 279–304 (LRRRSLRRSNSISKSPGPSSPKEPLL) form a disordered region. The segment covering 286–302 (RSNSISKSPGPSSPKEP) has biased composition (low complexity). Phosphoserine occurs at positions 293 and 298. Positions 331–608 (LIHGEVLGKG…DSFEALSLYL (278 aa)) constitute a Protein kinase domain. ATP is bound by residues 337–345 (LGKGFFGQA) and K360. Residue D451 is part of the active site. At T505 the chain carries Phosphothreonine; by ROCK1 and CDC42BP.

It belongs to the protein kinase superfamily. TKL Ser/Thr protein kinase family. As to quaternary structure, interacts with LIMK2b. In terms of assembly, interacts with LIMK2a. Binds ROCK1 and MARF1. Interacts with NISCH. In terms of processing, phosphorylated on serine and/or threonine residues by ROCK1.

The protein resides in the cytoplasm. It localises to the cytoskeleton. The protein localises to the spindle. Its subcellular location is the microtubule organizing center. It is found in the centrosome. The protein resides in the nucleus. It localises to the perinuclear region. The enzyme catalyses L-seryl-[protein] + ATP = O-phospho-L-seryl-[protein] + ADP + H(+). It carries out the reaction L-threonyl-[protein] + ATP = O-phospho-L-threonyl-[protein] + ADP + H(+). Its function is as follows. Serine/threonine-protein kinase that plays an essential role in the regulation of actin filament dynamics. Acts downstream of several Rho family GTPase signal transduction pathways. Involved in astral microtubule organization and mitotic spindle orientation during early stages of mitosis by mediating phosphorylation of TPPP. Displays serine/threonine-specific phosphorylation of myelin basic protein and histone (MBP) in vitro. Suppresses ciliogenesis via multiple pathways; phosphorylation of CFL1, suppression of directional trafficking of ciliary vesicles to the ciliary base, and by facilitating YAP1 nuclear localization where it acts as a transcriptional corepressor of the TEAD4 target genes AURKA and PLK1. This is LIM domain kinase 2 (LIMK2) from Homo sapiens (Human).